Reading from the N-terminus, the 380-residue chain is Alcohol dehydrogenase 2 (380 aa).

Cys48, Thr50, His70, Cys100, Cys103, Cys106, Cys114, and Cys178 together coordinate Zn(2+). An alcohol is bound by residues Thr50 and His70. Thr50 serves as a coordination point for NAD(+). NAD(+) is bound by residues 203–208, Asp227, Arg232, Thr273, Val296, 296–298, Phe323, and Arg373; these read GLGAVG and VGV.

This sequence belongs to the zinc-containing alcohol dehydrogenase family. In terms of assembly, homodimer. Homotetramer. The cofactor is Zn(2+).

Its subcellular location is the cytoplasm. It catalyses the reaction a primary alcohol + NAD(+) = an aldehyde + NADH + H(+). It carries out the reaction a secondary alcohol + NAD(+) = a ketone + NADH + H(+). The chain is Alcohol dehydrogenase 2 (ADH2) from Solanum lycopersicum (Tomato).